Consider the following 429-residue polypeptide: GTPase Obg (429 aa).

The 158-residue stretch at 1-158 folds into the Obg domain; sequence MFVDQVKIYV…RNVQLELKVL (158 aa). The interval 124–145 is disordered; the sequence is RGNKRFATPANPAPELSENGEP. Positions 159–329 constitute an OBG-type G domain; the sequence is ADVGLVGFPS…LLLAIADKLE (171 aa). GTP-binding positions include 165–172, 190–194, 212–215, 282–285, and 310–312; these read GFPSVGKS, FTTIV, DLPG, NKMD, and SAV. Residues Ser172 and Thr192 each coordinate Mg(2+). Residues 351 to 429 enclose the OCT domain; sequence KYIAEEPDFE…LLDYEFEFMD (79 aa).

It belongs to the TRAFAC class OBG-HflX-like GTPase superfamily. OBG GTPase family. Monomer. Requires Mg(2+) as cofactor.

The protein localises to the cytoplasm. Its function is as follows. An essential GTPase which binds GTP, GDP and possibly (p)ppGpp with moderate affinity, with high nucleotide exchange rates and a fairly low GTP hydrolysis rate. Plays a role in control of the cell cycle, stress response, ribosome biogenesis and in those bacteria that undergo differentiation, in morphogenesis control. This is GTPase Obg from Listeria welshimeri serovar 6b (strain ATCC 35897 / DSM 20650 / CCUG 15529 / CIP 8149 / NCTC 11857 / SLCC 5334 / V8).